The sequence spans 504 residues: Arabinose import ATP-binding protein AraG (504 aa).

ABC transporter domains follow at residues 8–243 (LSFR…MVGR) and 256–499 (YGEE…MPKV). Residue 40-47 (GENGAGKS) coordinates ATP.

This sequence belongs to the ABC transporter superfamily. Arabinose importer (TC 3.A.1.2.2) family. As to quaternary structure, the complex is composed of two ATP-binding proteins (AraG), two transmembrane proteins (AraH) and a solute-binding protein (AraF).

It is found in the cell inner membrane. It carries out the reaction L-arabinose(out) + ATP + H2O = L-arabinose(in) + ADP + phosphate + H(+). In terms of biological role, part of the ABC transporter complex AraFGH involved in arabinose import. Responsible for energy coupling to the transport system. The chain is Arabinose import ATP-binding protein AraG from Escherichia coli (strain UTI89 / UPEC).